A 133-amino-acid chain; its full sequence is Fatty acid-binding protein, heart (133 aa).

Position 2 is an N-acetylalanine (Ala-2). Thr-8 is subject to Phosphothreonine. Tyr-20 bears the Phosphotyrosine; by Tyr-kinases mark. Ser-23 carries the phosphoserine modification. Thr-30 carries the post-translational modification Phosphothreonine. Ser-83 is modified (phosphoserine). Residue 127–129 participates in (9Z)-octadecenoate binding; that stretch reads RTY. 127–129 provides a ligand contact to hexadecanoate; that stretch reads RTY. 127 to 129 is a binding site for octadecanoate; it reads RTY.

This sequence belongs to the calycin superfamily. Fatty-acid binding protein (FABP) family.

It is found in the cytoplasm. In terms of biological role, FABPs are thought to play a role in the intracellular transport of long-chain fatty acids and their acyl-CoA esters. The sequence is that of Fatty acid-binding protein, heart (Fabp3) from Mus musculus (Mouse).